The chain runs to 237 residues: Cysteine-rich venom protein DIS3 (237 aa).

A signal peptide spans 1 to 18 (MFVFILLSLAAVLQQSFG). The 129-residue stretch at 37 to 165 (VDKHNAFRRS…SYDYFYVCQY (129 aa)) folds into the SCP domain. 7 disulfide bridges follow: Cys-74–Cys-152, Cys-91–Cys-166, Cys-147–Cys-163, Cys-185–Cys-192, Cys-188–Cys-197, Cys-201–Cys-234, and Cys-219–Cys-232. The ShKT domain maps to 201 to 234 (CSREDVFTNCKSLVAKSNCQDDYIRKNCLATCFC).

This sequence belongs to the CRISP family. In terms of tissue distribution, expressed by the venom gland.

The protein resides in the secreted. Its function is as follows. Weakly blocks contraction of smooth muscle elicited by high potassium-induced depolarization, but does not block caffeine-stimulated contraction. May target voltage-gated calcium channels on smooth muscle. The polypeptide is Cysteine-rich venom protein DIS3 (Dispholidus typus (Boomslang)).